The primary structure comprises 510 residues: Probable sphingolipid transporter spinster homolog 3 (510 aa).

Residues 44-64 (SSLSPVWLLVIFCIINLLNYM) traverse the membrane as a helical segment. 2 N-linked (GlcNAc...) asparagine glycosylation sites follow: Asn75 and Asn98. 11 consecutive transmembrane segments (helical) span residues 106–126 (VLSS…ASLA), 136–156 (VWTI…IVLC), 158–178 (MFVG…IDDN), 185–205 (AAWL…GYVY), 219–239 (FWGE…MKPL), 298–318 (VFVV…AYSY), 336–356 (IFGA…GFIL), 369–387 (LLSG…AFTL), 392–414 (GFIA…VNYV), 430–450 (ISTV…VGIV), and 462–482 (LILT…KINL).

This sequence belongs to the major facilitator superfamily. Spinster (TC 2.A.1.49) family.

It localises to the mitochondrion inner membrane. In terms of biological role, probable sphingolipid transporter. This chain is Probable sphingolipid transporter spinster homolog 3, found in Arabidopsis thaliana (Mouse-ear cress).